The following is a 507-amino-acid chain: Pyruvate kinase (507 aa).

A substrate-binding site is contributed by arginine 50. K(+)-binding residues include asparagine 52, serine 54, aspartate 84, and threonine 85. Asparagine 52 to histidine 55 is an ATP binding site. Residues arginine 91 and lysine 177 each contribute to the ATP site. Glutamate 242 provides a ligand contact to Mg(2+). Positions 265, 266, and 298 each coordinate substrate. A Mg(2+)-binding site is contributed by aspartate 266.

This sequence belongs to the pyruvate kinase family. In terms of assembly, homotetramer. It depends on Mg(2+) as a cofactor. Requires K(+) as cofactor.

It carries out the reaction pyruvate + ATP = phosphoenolpyruvate + ADP + H(+). It functions in the pathway carbohydrate degradation; glycolysis; pyruvate from D-glyceraldehyde 3-phosphate: step 5/5. The sequence is that of Pyruvate kinase (pyk) from Dictyostelium discoideum (Social amoeba).